The sequence spans 182 residues: Putative manganese efflux pump MntP 1 (182 aa).

Transmembrane regions (helical) follow at residues 4-24 (LLLL…GLGA), 42-62 (IFQG…IAFI), 63-83 (SAFD…KMIY), 103-123 (LILS…LHLI), 127-147 (VFLS…LGVL), and 162-182 (ILGG…HLFF).

Belongs to the MntP (TC 9.B.29) family.

It localises to the cell inner membrane. Functionally, probably functions as a manganese efflux pump. The chain is Putative manganese efflux pump MntP 1 from Wolinella succinogenes (strain ATCC 29543 / DSM 1740 / CCUG 13145 / JCM 31913 / LMG 7466 / NCTC 11488 / FDC 602W) (Vibrio succinogenes).